Here is a 324-residue protein sequence, read N- to C-terminus: Glyoxylate/hydroxypyruvate reductase B (324 aa).

Residues arginine 237 and glutamate 266 contribute to the active site. Residue histidine 285 is the Proton donor of the active site.

This sequence belongs to the D-isomer specific 2-hydroxyacid dehydrogenase family. GhrB subfamily. In terms of assembly, homodimer.

The protein localises to the cytoplasm. The enzyme catalyses glycolate + NADP(+) = glyoxylate + NADPH + H(+). It catalyses the reaction (R)-glycerate + NAD(+) = 3-hydroxypyruvate + NADH + H(+). The catalysed reaction is (R)-glycerate + NADP(+) = 3-hydroxypyruvate + NADPH + H(+). Catalyzes the NADPH-dependent reduction of glyoxylate and hydroxypyruvate into glycolate and glycerate, respectively. The protein is Glyoxylate/hydroxypyruvate reductase B of Salmonella gallinarum (strain 287/91 / NCTC 13346).